The sequence spans 145 residues: D-aminoacyl-tRNA deacylase (145 aa).

A Gly-cisPro motif, important for rejection of L-amino acids motif is present at residues 137-138 (GP).

It belongs to the DTD family. Homodimer.

It localises to the cytoplasm. It carries out the reaction glycyl-tRNA(Ala) + H2O = tRNA(Ala) + glycine + H(+). The catalysed reaction is a D-aminoacyl-tRNA + H2O = a tRNA + a D-alpha-amino acid + H(+). An aminoacyl-tRNA editing enzyme that deacylates mischarged D-aminoacyl-tRNAs. Also deacylates mischarged glycyl-tRNA(Ala), protecting cells against glycine mischarging by AlaRS. Acts via tRNA-based rather than protein-based catalysis; rejects L-amino acids rather than detecting D-amino acids in the active site. By recycling D-aminoacyl-tRNA to D-amino acids and free tRNA molecules, this enzyme counteracts the toxicity associated with the formation of D-aminoacyl-tRNA entities in vivo and helps enforce protein L-homochirality. The chain is D-aminoacyl-tRNA deacylase from Shewanella piezotolerans (strain WP3 / JCM 13877).